The sequence spans 361 residues: Replication factor C subunit 3 (361 aa).

Positions 1-28 (MAGATAATPMDIDAAAPPPGAAAKGKAP) are enriched in low complexity. The interval 1 to 39 (MAGATAATPMDIDAAAPPPGAAAKGKAPLSSTPGGRAAP) is disordered. Residue 77–84 (YGPPGTGK) participates in ATP binding.

The protein belongs to the activator 1 small subunits family. As to quaternary structure, heterotetramer of subunits RFC2, RFC3, RFC4 and RFC5 that can form a complex with RFC1. Expressed in roots, leaves, shoot apical meristem (SAM), flag leaves and panicles.

The protein resides in the nucleus. Its function is as follows. May be involved in DNA replication and thus regulate cell proliferation. The chain is Replication factor C subunit 3 (RFC3) from Oryza sativa subsp. japonica (Rice).